The primary structure comprises 447 residues: Elongation factor 1-alpha (447 aa).

Residues 5–230 form the tr-type G domain; that stretch reads KVHINIVVIG…DNINEPKRPS (226 aa). The segment at 14–21 is G1; the sequence is GHVDSGKS. 14–21 lines the GTP pocket; the sequence is GHVDSGKS. Lys55 bears the N6,N6-dimethyllysine mark. The G2 stretch occupies residues 70 to 74; sequence GITID. At Lys79 the chain carries N6,N6,N6-trimethyllysine. Residues 91–94 are G3; the sequence is DAPG. GTP contacts are provided by residues 91 to 95 and 153 to 156; these read DAPGH and NKMD. Residues 153 to 156 form a G4 region; sequence NKMD. Residue Lys187 is modified to N6,N6,N6-trimethyllysine. The tract at residues 194 to 196 is G5; that stretch reads SGF. Lys261 is modified (N6-methyllysine). Glu289 carries the post-translational modification 5-glutamyl glycerylphosphorylethanolamine. Lys306 is modified (N6,N6,N6-trimethyllysine). 5-glutamyl glycerylphosphorylethanolamine is present on Glu362. Lys396 is subject to N6,N6,N6-trimethyllysine.

Belongs to the TRAFAC class translation factor GTPase superfamily. Classic translation factor GTPase family. EF-Tu/EF-1A subfamily.

Its subcellular location is the cytoplasm. Functionally, this protein promotes the GTP-dependent binding of aminoacyl-tRNA to the A-site of ribosomes during protein biosynthesis. This Pisum sativum (Garden pea) protein is Elongation factor 1-alpha.